The following is a 303-amino-acid chain: N-acetylmuramic acid 6-phosphate etherase (303 aa).

The SIS domain maps to 60 to 223 (ATASLQAGGR…STGVMVKLGK (164 aa)). The Proton donor role is filled by Glu88. Residue Glu119 is part of the active site.

The protein belongs to the GCKR-like family. MurNAc-6-P etherase subfamily. In terms of assembly, homodimer.

It catalyses the reaction N-acetyl-D-muramate 6-phosphate + H2O = N-acetyl-D-glucosamine 6-phosphate + (R)-lactate. It functions in the pathway amino-sugar metabolism; 1,6-anhydro-N-acetylmuramate degradation. It participates in amino-sugar metabolism; N-acetylmuramate degradation. The protein operates within cell wall biogenesis; peptidoglycan recycling. Its function is as follows. Specifically catalyzes the cleavage of the D-lactyl ether substituent of MurNAc 6-phosphate, producing GlcNAc 6-phosphate and D-lactate. Together with AnmK, is also required for the utilization of anhydro-N-acetylmuramic acid (anhMurNAc) either imported from the medium or derived from its own cell wall murein, and thus plays a role in cell wall recycling. This Pectobacterium atrosepticum (strain SCRI 1043 / ATCC BAA-672) (Erwinia carotovora subsp. atroseptica) protein is N-acetylmuramic acid 6-phosphate etherase.